We begin with the raw amino-acid sequence, 464 residues long: Mitogen-activated protein kinase 10 (464 aa).

One can recognise a Protein kinase domain in the interval 64-359 (YQNLKPIGSG…VDDALQHPYI (296 aa)). ATP contacts are provided by residues 70–78 (IGSGAQGIV) and K93. The Proton acceptor role is filled by D189. At T221 the chain carries Phosphothreonine; by MAP2K7. A TXY motif is present at residues 221-223 (TPY). At Y223 the chain carries Phosphotyrosine; by MAP2K4. Residues 405–464 (TKNGVVKGQPSPSGAAVNSSESLPPSSSVNDISSMSTDQTLASDTDSSLEASAGPLGCCR) are disordered. Positions 423–432 (SSESLPPSSS) are enriched in low complexity. Residues 433 to 454 (VNDISSMSTDQTLASDTDSSLE) show a composition bias toward polar residues. 2 S-palmitoyl cysteine lipidation sites follow: C462 and C463.

The protein belongs to the protein kinase superfamily. CMGC Ser/Thr protein kinase family. MAP kinase subfamily. In terms of assembly, interacts with MAPKBP1. Interacts with MAPK8IP1/JIP-1 and MAPK8IP3/JIP-3/JSAP1. Interacts with SPAG9/MAPK8IP4/JIP4. Interacts with HDAC9. Interacts with ARRB2; the interaction enhances MAPK10 activation by MAP3K5. Interacts with SARM1. Interacts with JUND; interaction is inhibited in the presence of MEN1. It depends on Mg(2+) as a cofactor. Post-translationally, dually phosphorylated on Thr-221 and Tyr-223 by MAP2K4 and MAP2K7, which activates the enzyme. MAP2K7 shows a strong preference for Thr-221 while MAP2K4 phosphorylates Tyr-223 preferentially. Weakly autophosphorylated on threonine and tyrosine residues in vitro. In terms of processing, palmitoylation regulates subcellular location and axonal development. In terms of tissue distribution, specific to a subset of neurons in the nervous system. Present in the hippocampus and areas, cerebellum, striatum, brain stem, and weakly in the spinal cord. Very weak expression in testis and kidney.

It is found in the cytoplasm. It localises to the membrane. Its subcellular location is the nucleus. The protein localises to the mitochondrion. The catalysed reaction is L-seryl-[protein] + ATP = O-phospho-L-seryl-[protein] + ADP + H(+). It carries out the reaction L-threonyl-[protein] + ATP = O-phospho-L-threonyl-[protein] + ADP + H(+). With respect to regulation, activated by threonine and tyrosine phosphorylation by two dual specificity kinases, MAP2K4 and MAP2K7. MAP2K7 phosphorylates MAPK10 on Thr-221 causing a conformational change and a large increase in Vmax. MAP2K4 then phosphorylates Tyr-223 resulting in a further increase in Vmax. Inhibited by dual specificity phosphatases, such as DUSP1. Inhibited by HDAC9. In terms of biological role, serine/threonine-protein kinase involved in various processes such as neuronal proliferation, differentiation, migration and programmed cell death. Extracellular stimuli such as pro-inflammatory cytokines or physical stress stimulate the stress-activated protein kinase/c-Jun N-terminal kinase (SAP/JNK) signaling pathway. In this cascade, two dual specificity kinases MAP2K4/MKK4 and MAP2K7/MKK7 phosphorylate and activate MAPK10/JNK3. In turn, MAPK10/JNK3 phosphorylates a number of transcription factors, primarily components of AP-1 such as JUN and ATF2 and thus regulates AP-1 transcriptional activity. Plays regulatory roles in the signaling pathways during neuronal apoptosis. Phosphorylates the neuronal microtubule regulator STMN2. Acts in the regulation of the amyloid-beta precursor protein/APP signaling during neuronal differentiation by phosphorylating APP. Also participates in neurite growth in spiral ganglion neurons. Phosphorylates the CLOCK-BMAL1 heterodimer and plays a role in the photic regulation of the circadian clock. Phosphorylates JUND and this phosphorylation is inhibited in the presence of MEN1. The protein is Mitogen-activated protein kinase 10 (MAPK10) of Homo sapiens (Human).